A 286-amino-acid polypeptide reads, in one-letter code: Phosphate import ATP-binding protein PstB (286 aa).

In terms of domain architecture, ABC transporter spans 40–281 (VVAKDFSIFY…PRDRMTEDYI (242 aa)). 72 to 79 (GPSGCGKS) contributes to the ATP binding site.

The protein belongs to the ABC transporter superfamily. Phosphate importer (TC 3.A.1.7) family. The complex is composed of two ATP-binding proteins (PstB), two transmembrane proteins (PstC and PstA) and a solute-binding protein (PstS).

It localises to the cell inner membrane. The enzyme catalyses phosphate(out) + ATP + H2O = ADP + 2 phosphate(in) + H(+). Functionally, part of the ABC transporter complex PstSACB involved in phosphate import. Responsible for energy coupling to the transport system. This is Phosphate import ATP-binding protein PstB from Chlorobium luteolum (strain DSM 273 / BCRC 81028 / 2530) (Pelodictyon luteolum).